We begin with the raw amino-acid sequence, 282 residues long: BTB/POZ domain-containing protein At3g56230 (282 aa).

Over residues 40–50 the composition is skewed to basic and acidic residues; that stretch reads GSKEDRHDKSN. Residues 40 to 66 form a disordered region; that stretch reads GSKEDRHDKSNHNSTINNGSSISSSPL. The segment covering 51-64 has biased composition (low complexity); that stretch reads HNSTINNGSSISSS. The BTB domain maps to 111 to 181; it reads ADILLKPGDD…LYTGTLASDK (71 aa).

It participates in protein modification; protein ubiquitination. Functionally, may act as a substrate-specific adapter of an E3 ubiquitin-protein ligase complex (CUL3-RBX1-BTB) which mediates the ubiquitination and subsequent proteasomal degradation of target proteins. This Arabidopsis thaliana (Mouse-ear cress) protein is BTB/POZ domain-containing protein At3g56230.